The chain runs to 811 residues: DNA mismatch repair protein MutS (811 aa).

Residue 595 to 602 (GPNMSGKS) coordinates ATP.

This sequence belongs to the DNA mismatch repair MutS family.

Its function is as follows. This protein is involved in the repair of mismatches in DNA. It is possible that it carries out the mismatch recognition step. This protein has a weak ATPase activity. The polypeptide is DNA mismatch repair protein MutS (Pseudothermotoga lettingae (strain ATCC BAA-301 / DSM 14385 / NBRC 107922 / TMO) (Thermotoga lettingae)).